The chain runs to 945 residues: 26S proteasome regulatory subunit RPN2 (945 aa).

Residue Ser2 is modified to N-acetylserine. PC repeat units follow at residues 366–399, 403–440, 445–479, 480–514, 516–549, 550–585, 586–618, 620–654, 655–692, and 698–734; these read TATA…SSRF, GSLY…EDVD, GASL…TSGE, AAAL…GNIT, GLAV…LLRY, GGAF…DVRR, AAVI…AHVR, GTAF…FVRQ, AAMI…KHQE, and GACV…VGLV. Thr801 bears the Phosphothreonine mark. Residues 810–819 are compositionally biased toward basic residues; the sequence is AKARAKKTKK. A disordered region spans residues 810–851; it reads AKARAKKTKKEKGPNEEEKKKEHEEKEKERETNKKGIKETKE. Positions 820–851 are enriched in basic and acidic residues; sequence EKGPNEEEKKKEHEEKEKERETNKKGIKETKE. Position 932 is a phosphothreonine (Thr932).

Belongs to the proteasome subunit S1 family. In terms of assembly, interacts with UBR1. N-acetylated by NAT1.

Functionally, acts as a regulatory subunit of the 26S proteasome which is involved in the ATP-dependent degradation of ubiquitinated proteins. The polypeptide is 26S proteasome regulatory subunit RPN2 (RPN2) (Saccharomyces cerevisiae (strain ATCC 204508 / S288c) (Baker's yeast)).